Here is a 434-residue protein sequence, read N- to C-terminus: Methylenetetrahydrofolate--tRNA-(uracil-5-)-methyltransferase TrmFO (434 aa).

9–14 lines the FAD pocket; it reads GAGLAG.

The protein belongs to the MnmG family. TrmFO subfamily. Requires FAD as cofactor.

The protein localises to the cytoplasm. It carries out the reaction uridine(54) in tRNA + (6R)-5,10-methylene-5,6,7,8-tetrahydrofolate + NADH + H(+) = 5-methyluridine(54) in tRNA + (6S)-5,6,7,8-tetrahydrofolate + NAD(+). The catalysed reaction is uridine(54) in tRNA + (6R)-5,10-methylene-5,6,7,8-tetrahydrofolate + NADPH + H(+) = 5-methyluridine(54) in tRNA + (6S)-5,6,7,8-tetrahydrofolate + NADP(+). Its function is as follows. Catalyzes the folate-dependent formation of 5-methyl-uridine at position 54 (M-5-U54) in all tRNAs. The chain is Methylenetetrahydrofolate--tRNA-(uracil-5-)-methyltransferase TrmFO from Listeria welshimeri serovar 6b (strain ATCC 35897 / DSM 20650 / CCUG 15529 / CIP 8149 / NCTC 11857 / SLCC 5334 / V8).